The primary structure comprises 869 residues: Retrovirus-related Pol polyprotein from type-1 retrotransposable element R2 (869 aa).

The Reverse transcriptase domain occupies 199 to 475 (IFVFYGRVPS…DLWKYLGVVY (277 aa)). The interval 601-869 (LYASISHSCK…FNNVTTVVHW (269 aa)) is nucleic acid-binding endonuclease.

The catalysed reaction is DNA(n) + a 2'-deoxyribonucleoside 5'-triphosphate = DNA(n+1) + diphosphate. This chain is Retrovirus-related Pol polyprotein from type-1 retrotransposable element R2, found in Bradysia coprophila (Dark-winged fungus gnat).